Consider the following 389-residue polypeptide: Carbamoyl phosphate synthase small chain (389 aa).

The tract at residues 1–199 (MFNPAILVLA…AGKPFNLQTT (199 aa)) is CPSase. L-glutamine is bound by residues Ser50, Gly251, and Gly253. One can recognise a Glutamine amidotransferase type-1 domain in the interval 203–389 (HVVAYDFGIK…FINAVQATKA (187 aa)). Cys279 functions as the Nucleophile in the catalytic mechanism. Residues Leu280, Gln283, Asn321, Gly323, and Phe324 each contribute to the L-glutamine site. Residues His363 and Glu365 contribute to the active site.

It belongs to the CarA family. Composed of two chains; the small (or glutamine) chain promotes the hydrolysis of glutamine to ammonia, which is used by the large (or ammonia) chain to synthesize carbamoyl phosphate. Tetramer of heterodimers (alpha,beta)4.

It catalyses the reaction hydrogencarbonate + L-glutamine + 2 ATP + H2O = carbamoyl phosphate + L-glutamate + 2 ADP + phosphate + 2 H(+). The catalysed reaction is L-glutamine + H2O = L-glutamate + NH4(+). It functions in the pathway amino-acid biosynthesis; L-arginine biosynthesis; carbamoyl phosphate from bicarbonate: step 1/1. The protein operates within pyrimidine metabolism; UMP biosynthesis via de novo pathway; (S)-dihydroorotate from bicarbonate: step 1/3. In terms of biological role, small subunit of the glutamine-dependent carbamoyl phosphate synthetase (CPSase). CPSase catalyzes the formation of carbamoyl phosphate from the ammonia moiety of glutamine, carbonate, and phosphate donated by ATP, constituting the first step of 2 biosynthetic pathways, one leading to arginine and/or urea and the other to pyrimidine nucleotides. The small subunit (glutamine amidotransferase) binds and cleaves glutamine to supply the large subunit with the substrate ammonia. This chain is Carbamoyl phosphate synthase small chain, found in Haemophilus ducreyi (strain 35000HP / ATCC 700724).